The sequence spans 256 residues: Agamous-like MADS-box protein AGL18 (256 aa).

The MADS-box domain occupies 1–61 (MGRGRIEIKK…GKIYDFSSVC (61 aa)). The 91-residue stretch at 94-184 (NEAVLRNDDS…RKQVEMLGRG (91 aa)) folds into the K-box domain. A disordered region spans residues 179–232 (EMLGRGSGPKVLNERPQDSSPEADPESSSSEEDENDNEEHHSDTSLQLGLSSTG). Residues 199–215 (PEADPESSSSEEDENDN) show a composition bias toward acidic residues. A compositionally biased stretch (polar residues) spans 222 to 232 (TSLQLGLSSTG).

Mostly expressed in pollen, roots, flowers and siliques, and to a lower extent, in stems and leaves. Expressed in the endosperm and in developing male and female gametophytes. Also present in seedlings.

It localises to the nucleus. Probable transcription factor involved in the negative regulation of flowering, probably through the photoperiodic pathway. Prevents premature flowering. Downstream regulator of a subset of the MIKC* MADS-controlled genes required during pollen maturation. This is Agamous-like MADS-box protein AGL18 (AGL18) from Arabidopsis thaliana (Mouse-ear cress).